Reading from the N-terminus, the 117-residue chain is Large ribosomal subunit protein bL19 (117 aa).

The protein belongs to the bacterial ribosomal protein bL19 family.

Its function is as follows. This protein is located at the 30S-50S ribosomal subunit interface and may play a role in the structure and function of the aminoacyl-tRNA binding site. The chain is Large ribosomal subunit protein bL19 from Exiguobacterium sp. (strain ATCC BAA-1283 / AT1b).